We begin with the raw amino-acid sequence, 48 residues long: MPQLVPFYFMNLLTGGILAISLLLYFVATYLLPNILRLLIARNIIIKL.

Residues 12–32 (LLTGGILAISLLLYFVATYLL) traverse the membrane as a helical segment.

This sequence belongs to the ATPase protein 8 family. In terms of assembly, F-type ATPases have 2 components, CF(1) - the catalytic core - and CF(0) - the membrane proton channel.

The protein localises to the mitochondrion membrane. Its function is as follows. Mitochondrial membrane ATP synthase (F(1)F(0) ATP synthase or Complex V) produces ATP from ADP in the presence of a proton gradient across the membrane which is generated by electron transport complexes of the respiratory chain. F-type ATPases consist of two structural domains, F(1) - containing the extramembraneous catalytic core and F(0) - containing the membrane proton channel, linked together by a central stalk and a peripheral stalk. During catalysis, ATP synthesis in the catalytic domain of F(1) is coupled via a rotary mechanism of the central stalk subunits to proton translocation. Part of the complex F(0) domain. Minor subunit located with subunit a in the membrane. The sequence is that of ATP synthase protein 8 (ATP8) from Candida parapsilosis (Yeast).